We begin with the raw amino-acid sequence, 93 residues long: MDGIKYAVFTEKSLRLLGKNQYTFNVESGFTKTEIKHWVELFFGVKVVAVNSHRLPGKGRRMGPILGHTMHYRRMIITLQPGYSIPLLDRETN.

This sequence belongs to the universal ribosomal protein uL23 family. Part of the 50S ribosomal subunit.

It localises to the plastid. Its subcellular location is the chloroplast. Its function is as follows. Binds to 23S rRNA. The sequence is that of Large ribosomal subunit protein uL23cy (rpl23-B) from Sorghum bicolor (Sorghum).